Here is a 226-residue protein sequence, read N- to C-terminus: Calcium-binding protein 1 (226 aa).

Residue Gly2 is the site of N-myristoyl glycine attachment. Cys4 is lipidated: S-palmitoyl cysteine. EF-hand domains follow at residues 81 to 116 (EEIE…MGYM), 135 to 152 (GHVD…KLLA), 158 to 193 (IGVK…LLGH), and 195 to 226 (VGHR…MMSR). Ca(2+) is bound by residues Asp94, Asp96, Asp98, Tyr100, and Asp105. Asp171, Asn173, Asp175, and Glu177 together coordinate Ca(2+). Ser179 carries the post-translational modification Phosphoserine. Ca(2+) contacts are provided by Glu182, Asp208, Asn210, Asp212, Arg214, and Glu219.

Homodimer. Interacts (via C-terminus) with ITPR1, ITPR2 and ITPR3. This binding is calcium dependent and the interaction correlates with calcium concentration. An additional calcium-independent interaction with the N-terminus of ITPR1 results in a decreased InsP(3) binding to the receptor. Interacts with CACNA1A (via C-terminal CDB motif) in the pre- and postsynaptic membranes. Interacts with CACNA1C (via C-terminal C and IQ motifs). Interacts with CACNA1D. The binding to the C motif is calcium independent whereas the binding to IQ requires the presence of calcium and is mutually exclusive with calmodulin binding. Interacts with TRPC5 (via C-terminus). Interacts (via EF-hands 1 and 2) at microtubules with MAP1LC3B. Interacts with MYO1C. Interacts (via EF-hands 1 and 2) with NSMF (via the central NLS-containing motif region), the interaction occurs in a calcium dependent manner after synaptic NMDA receptor stimulation and prevents nuclear import of NSMF. Interacts with SPACA9. Phosphorylated. The phosphorylation regulates the activity.

Its subcellular location is the cytoplasm. The protein localises to the cytoskeleton. The protein resides in the perinuclear region. It localises to the cell membrane. It is found in the golgi apparatus. Its subcellular location is the postsynaptic density. Modulates calcium-dependent activity of inositol 1,4,5-triphosphate receptors (ITPRs). Inhibits agonist-induced intracellular calcium signaling. Enhances inactivation and does not support calcium-dependent facilitation of voltage-dependent P/Q-type calcium channels. Causes calcium-dependent facilitation and inhibits inactivation of L-type calcium channels by binding to the same sites as calmodulin in the C-terminal domain of CACNA1C, but has an opposite effect on channel function. Suppresses the calcium-dependent inactivation of CACNA1D. Inhibits TRPC5 channels. Prevents NMDA receptor-induced cellular degeneration. Required for the normal transfer of light signals through the retina. This chain is Calcium-binding protein 1 (CABP1), found in Bos taurus (Bovine).